Reading from the N-terminus, the 190-residue chain is A-type ATP synthase subunit E (190 aa).

This sequence belongs to the V-ATPase E subunit family. Has multiple subunits with at least A(3), B(3), C, D, E, F, H, I and proteolipid K(x).

The protein resides in the cell membrane. Component of the A-type ATP synthase that produces ATP from ADP in the presence of a proton gradient across the membrane. The sequence is that of A-type ATP synthase subunit E from Pyrobaculum islandicum (strain DSM 4184 / JCM 9189 / GEO3).